A 458-amino-acid polypeptide reads, in one-letter code: Maturase-like protein 1 (458 aa).

The protein to group II intron maturases.

The protein resides in the plastid. It localises to the chloroplast. Could be required for group III intron excision. The protein is Maturase-like protein 1 (mat1) of Euglena gracilis.